Reading from the N-terminus, the 930-residue chain is Protocadherin gamma-B6 (930 aa).

The first 30 residues, 1–30 (MGGSCAQRRRAGPRQVLFPLLLPLFYPTLS), serve as a signal peptide directing secretion. Cadherin domains follow at residues 31–133 (EPIR…APQF), 134–242 (DKKE…PPVF), 243–347 (SRDE…SPEI), 348–452 (IITS…APVF), 453–562 (DQTS…APRV), and 570–675 (DGSA…LPDL). Over 31-691 (EPIRYSIPEE…SDPQAELQFY (661 aa)) the chain is Extracellular. 3 N-linked (GlcNAc...) asparagine glycosylation sites follow: Asn304, Asn419, and Asn545. Residues 692–712 (LVVALALISVLFLLAVILAIA) form a helical membrane-spanning segment. At 713 to 930 (LRLRRSLSPA…KKKSGKKEKK (218 aa)) the chain is on the cytoplasmic side. Disordered stretches follow at residues 791 to 839 (PHGG…WPNN) and 900 to 930 (ATLT…KEKK). The span at 800 to 839 (HPETLTSQAPPNTDWRFSQAQRPGTSGSQNGDDTGTWPNN) shows a compositional bias: polar residues. The segment covering 920-930 (NKKKSGKKEKK) has biased composition (basic residues).

It localises to the cell membrane. Potential calcium-dependent cell-adhesion protein. May be involved in the establishment and maintenance of specific neuronal connections in the brain. The chain is Protocadherin gamma-B6 (PCDHGB6) from Homo sapiens (Human).